A 492-amino-acid chain; its full sequence is Ferruginol synthase (492 aa).

The chain crosses the membrane as a helical span at residues 1 to 21 (MDPFPLVAAALFIAATWFITF). C436 serves as a coordination point for heme.

This sequence belongs to the cytochrome P450 family. It depends on heme as a cofactor. In terms of tissue distribution, expressed in leaf glandular trichomes.

The protein resides in the membrane. The catalysed reaction is abieta-8,11,13-triene + reduced [NADPH--hemoprotein reductase] + O2 = ferruginol + oxidized [NADPH--hemoprotein reductase] + H2O + H(+). It carries out the reaction ferruginol + reduced [NADPH--hemoprotein reductase] + O2 = 11-hydroxyferruginol + oxidized [NADPH--hemoprotein reductase] + H2O + H(+). The enzyme catalyses miltiradiene + 2 reduced [NADPH--hemoprotein reductase] + 2 O2 = 11-oxomiltiradiene + 2 oxidized [NADPH--hemoprotein reductase] + 3 H2O + 2 H(+). Its pathway is secondary metabolite biosynthesis; terpenoid biosynthesis. In terms of biological role, monooxygenase involved in the biosynthesis of labdane-related diterpenes natural products. Catalyzes the oxidation of abietatriene to produce ferruginol. Catalyzes the oxidation of ferruginol at C-12 to produce 11-hydroxyferruginol. Ferruginol and 11-hydroxyferruginol are intermediates in the biosynthesis of carnosate, a potent antioxidant. May also convert miltiradiene into 11-oxomiltiradiene. The sequence is that of Ferruginol synthase from Salvia fruticosa (Greek sage).